A 56-amino-acid polypeptide reads, in one-letter code: Aspartyl-phosphate phosphatase YisI (56 aa).

The protein belongs to the spo0E family.

In terms of biological role, aspartyl-phosphate phosphatase which specifically dephosphorylates the sporulation transcription factor Spo0A-P and negatively regulates the sporulation initiation pathway in order to control the proper timing of sporulation. The polypeptide is Aspartyl-phosphate phosphatase YisI (yisI) (Bacillus subtilis (strain 168)).